The sequence spans 238 residues: MEATQFQTMLEERGILLSSRALAQFERYYELLVEWNEKMNLTAITDKPGVYVKHFFDSVSPAFYYDFSAPLALCDVGSGAGFPSLPLKICFPHLRVSIVDSLQKRIRFLEHLITELGLADVALYHERAETFARQKGMRESFDVVTARAVARMPVLVELCLPLVKMGGTFIAMKAASALEELKEGNKAISVLGGEVTATETFTLPFDEGERTIIFIQKMRKTPNQYPRKPGTPNKQPIQ.

S-adenosyl-L-methionine is bound by residues G77, F82, 128 to 129, and R147; that span reads AE.

The protein belongs to the methyltransferase superfamily. RNA methyltransferase RsmG family.

It localises to the cytoplasm. In terms of biological role, specifically methylates the N7 position of guanine in position 535 of 16S rRNA. The sequence is that of Ribosomal RNA small subunit methyltransferase G from Geobacillus kaustophilus (strain HTA426).